Consider the following 478-residue polypeptide: Putative indole-3-acetic acid-amido synthetase GH3.10 (478 aa).

This sequence belongs to the IAA-amido conjugating enzyme family.

Its function is as follows. May catalyze the synthesis of indole-3-acetic acid (IAA)-amino acid conjugates, providing a mechanism for the plant to cope with the presence of excess auxin. The sequence is that of Putative indole-3-acetic acid-amido synthetase GH3.10 (GH3.10) from Oryza sativa subsp. japonica (Rice).